The sequence spans 329 residues: Basic leucine zipper 61 (329 aa).

Disordered regions lie at residues 1 to 22 and 98 to 204; these read MAQLPPKIPTMTTPNWPDFSSQ and DDVH…HDPK. Over residues 10-22 the composition is skewed to polar residues; that stretch reads TMTTPNWPDFSSQ. Residues 119–133 show a composition bias toward low complexity; it reads PTRSSSNTSTPSDHN. The span at 139–154 shows a compositional bias: basic and acidic residues; that stretch reads DNNKEAPPSDHDHHMD. Residues 155 to 169 show a composition bias toward low complexity; the sequence is NNVANQNNAAGNNYN. Residues 202–254 form the bZIP domain; sequence DPKRVKRILANRQSAQRSRVRKLQYISELERSVTSLQTEVSVLSPRVAFLDHQ. The basic motif stretch occupies residues 204–223; the sequence is KRVKRILANRQSAQRSRVRK. A leucine-zipper region spans residues 230 to 251; it reads LERSVTSLQTEVSVLSPRVAFL. Positions 304 to 313 are enriched in polar residues; that stretch reads KMENNVSDQS. Residues 304–329 are disordered; the sequence is KMENNVSDQSPADIKPSVEKEQLLNV. Basic and acidic residues predominate over residues 319–329; the sequence is PSVEKEQLLNV.

Forms heterodimers with BZIP18, BZIP43 and VIP1/BZIP51.

It localises to the nucleus. Functionally, transcriptional activator. The polypeptide is Basic leucine zipper 61 (Arabidopsis thaliana (Mouse-ear cress)).